The following is a 140-amino-acid chain: Large-conductance mechanosensitive channel (140 aa).

3 helical membrane-spanning segments follow: residues 14-34 (VLDL…VKSL), 37-57 (YLIN…DWVL), and 66-86 (FGSF…VFIL).

The protein belongs to the MscL family. Homopentamer.

It localises to the cell membrane. In terms of biological role, channel that opens in response to stretch forces in the membrane lipid bilayer. May participate in the regulation of osmotic pressure changes within the cell. In Pediococcus pentosaceus (strain ATCC 25745 / CCUG 21536 / LMG 10740 / 183-1w), this protein is Large-conductance mechanosensitive channel.